The chain runs to 585 residues: Glutamine--tRNA ligase (585 aa).

Residues 51-61 (PEPNGYLHIGH) carry the 'HIGH' region motif. Residues 52–54 (EPN) and 58–64 (HIGHAKS) contribute to the ATP site. Residues Asp-84 and Tyr-238 each contribute to the L-glutamine site. ATP-binding positions include Thr-257 and 292–293 (RL). A 'KMSKS' region motif is present at residues 299–303 (ITSKR).

This sequence belongs to the class-I aminoacyl-tRNA synthetase family. In terms of assembly, monomer.

It localises to the cytoplasm. It catalyses the reaction tRNA(Gln) + L-glutamine + ATP = L-glutaminyl-tRNA(Gln) + AMP + diphosphate. The sequence is that of Glutamine--tRNA ligase from Cupriavidus taiwanensis (strain DSM 17343 / BCRC 17206 / CCUG 44338 / CIP 107171 / LMG 19424 / R1) (Ralstonia taiwanensis (strain LMG 19424)).